The chain runs to 317 residues: Glutathione synthetase (317 aa).

Residues 126-311 form the ATP-grasp domain; the sequence is KFFATQFTQC…IGDKLMDAIA (186 aa). Position 152–208 (152–208) interacts with ATP; that stretch reads AAEHRDIILKPLDGMGGSSIFRHREGDPNLSVILETLTQHGSQQIMAQRYLPEIKDG. Positions 282 and 284 each coordinate Mg(2+).

The protein belongs to the prokaryotic GSH synthase family. Requires Mg(2+) as cofactor. Mn(2+) is required as a cofactor.

It catalyses the reaction gamma-L-glutamyl-L-cysteine + glycine + ATP = glutathione + ADP + phosphate + H(+). It participates in sulfur metabolism; glutathione biosynthesis; glutathione from L-cysteine and L-glutamate: step 2/2. In Pseudomonas aeruginosa (strain ATCC 15692 / DSM 22644 / CIP 104116 / JCM 14847 / LMG 12228 / 1C / PRS 101 / PAO1), this protein is Glutathione synthetase.